The chain runs to 243 residues: Small ribosomal subunit protein uS3 (243 aa).

The KH type-2 domain occupies 38 to 106; sequence IRKYLNARLA…DIQINIFEVK (69 aa). The disordered stretch occupies residues 217-243; sequence TQTKESGRGGNGNNNGGKNFKRKKNNR.

Belongs to the universal ribosomal protein uS3 family. As to quaternary structure, part of the 30S ribosomal subunit. Forms a tight complex with proteins S10 and S14.

In terms of biological role, binds the lower part of the 30S subunit head. Binds mRNA in the 70S ribosome, positioning it for translation. This chain is Small ribosomal subunit protein uS3, found in Phocaeicola vulgatus (strain ATCC 8482 / DSM 1447 / JCM 5826 / CCUG 4940 / NBRC 14291 / NCTC 11154) (Bacteroides vulgatus).